We begin with the raw amino-acid sequence, 389 residues long: Succinate--CoA ligase [ADP-forming] subunit beta (389 aa).

An ATP-grasp domain is found at 9-236; the sequence is RDMFEAHGVP…KDAADPLEAK (228 aa). Residues Lys-45, 52–54, Ala-94, and Glu-99 each bind ATP; that span reads GRG. Asn-191 and Asp-205 together coordinate Mg(2+). Residues Asn-256 and 318–320 contribute to the substrate site; that span reads GIT.

This sequence belongs to the succinate/malate CoA ligase beta subunit family. Heterotetramer of two alpha and two beta subunits. Mg(2+) serves as cofactor.

The enzyme catalyses succinate + ATP + CoA = succinyl-CoA + ADP + phosphate. The catalysed reaction is GTP + succinate + CoA = succinyl-CoA + GDP + phosphate. The protein operates within carbohydrate metabolism; tricarboxylic acid cycle; succinate from succinyl-CoA (ligase route): step 1/1. Succinyl-CoA synthetase functions in the citric acid cycle (TCA), coupling the hydrolysis of succinyl-CoA to the synthesis of either ATP or GTP and thus represents the only step of substrate-level phosphorylation in the TCA. The beta subunit provides nucleotide specificity of the enzyme and binds the substrate succinate, while the binding sites for coenzyme A and phosphate are found in the alpha subunit. This is Succinate--CoA ligase [ADP-forming] subunit beta from Paenarthrobacter aurescens (strain TC1).